Here is a 619-residue protein sequence, read N- to C-terminus: Mitochondrial Rho GTPase 1-A (619 aa).

The Cytoplasmic portion of the chain corresponds to 1–593; the sequence is MRKDVRILLV…TQADLKNSTF (593 aa). In terms of domain architecture, Miro 1 spans 2–168; the sequence is RKDVRILLVG…FYYAQKAVLH (167 aa). GTP contacts are provided by lysine 14, glycine 16, lysine 17, threonine 18, and serine 19. Threonine 18 is a binding site for Mg(2+). Positions 35 and 57 each coordinate Mg(2+). Serine 59, asparagine 118, lysine 119, aspartate 121, alanine 149, and lysine 150 together coordinate GTP. 2 consecutive EF-hand domains span residues 184–219 and 304–339; these read SCIKALTRIFKISDLDNDGILNDNELNFFQRTCFNI and NAYLFLQSVFDKHDKDRDCALSPDELKDLFKVFPYM. Residues aspartate 197, aspartate 199, aspartate 201, glutamate 208, aspartate 317, aspartate 319, aspartate 321, alanine 323, and glutamate 328 each contribute to the Ca(2+) site. Residues 416 to 580 form the Miro 2 domain; the sequence is RSVFRCNVLG…YTKLTTMAMY (165 aa). Arginine 427, cysteine 429, glycine 430, lysine 431, serine 432, glycine 433, lysine 447, lysine 529, aspartate 531, threonine 559, and cysteine 560 together coordinate GTP. Arginine 427 serves as a coordination point for Mg(2+). Residues 594–616 traverse the membrane as a helical; Anchor for type IV membrane protein segment; the sequence is WLRASVGATVFAVLGFAMYKALL. At 617–619 the chain is on the mitochondrial intermembrane side; that stretch reads KQR.

Belongs to the mitochondrial Rho GTPase family. As to quaternary structure, homodimer.

The protein resides in the mitochondrion outer membrane. The enzyme catalyses GTP + H2O = GDP + phosphate + H(+). It catalyses the reaction ATP + H2O = ADP + phosphate + H(+). The catalysed reaction is UTP + H2O = UDP + phosphate + H(+). Atypical mitochondrial nucleoside-triphosphatase (NTPase) involved in mitochondrial trafficking. Probably involved in control of anterograde transport of mitochondria and their subcellular distribution. Can hydrolyze GTP, ATP and UTP. The chain is Mitochondrial Rho GTPase 1-A (rhot1a) from Danio rerio (Zebrafish).